Reading from the N-terminus, the 266-residue chain is Interleukin-1 beta (266 aa).

A propeptide spanning residues 1-113 (MATVPEPINE…ETSSDELLCD (113 aa)) is cleaved from the precursor.

This sequence belongs to the IL-1 family. Monomer. In its precursor form, weakly interacts with full-length MEFV; the mature cytokine does not interact at all. Interacts with integrins ITGAV:ITGBV and ITGA5:ITGB1; integrin-binding is required for IL1B signaling. Interacts with cargo receptor TMED10; the interaction is direct and is required for the secretion of IL1B mature form. Interacts with HSP90AB1; the interaction facilitates cargo translocation into the ERGIC. Interacts with HSP90B1; the interaction facilitates cargo translocation into the ERGIC.

It is found in the cytoplasm. The protein resides in the cytosol. The protein localises to the secreted. Its subcellular location is the lysosome. It localises to the extracellular exosome. Potent pro-inflammatory cytokine. Initially discovered as the major endogenous pyrogen, induces prostaglandin synthesis, neutrophil influx and activation, T-cell activation and cytokine production, B-cell activation and antibody production, and fibroblast proliferation and collagen production. Promotes Th17 differentiation of T-cells. Synergizes with IL12/interleukin-12 to induce IFNG synthesis from T-helper 1 (Th1) cells. Plays a role in angiogenesis by inducing VEGF production synergistically with TNF and IL6. Involved in transduction of inflammation downstream of pyroptosis: its mature form is specifically released in the extracellular milieu by passing through the gasdermin-D (GSDMD) pore. In Ovis aries (Sheep), this protein is Interleukin-1 beta (IL1B).